We begin with the raw amino-acid sequence, 286 residues long: MEGKEEDVRVGANKFPERQPIGTSAQSDKDYKEPPPAPFFEPGELSSWSFWRAGIAEFIATFLFLYITVLTVMGVKRSPNMCASVGIQGIAWAFGGMIFALVYCTAGISGGHINPAVTFGLFLARKLSLTRALYYIVMQCLGAICGAGVVKGFQPKQYQALGGGANTVAHGYTKGSGLGAEIIGTFVLVYTVFSATDAKRNARDSHVPILAPLPIGFAVFLVHLATIPITGTGINPARSLGAAIIYNKDHSWDDHWVFWVGPFIGAALAALYHVVVIRAIPFKSRS.

Met-1 bears the N-acetylmethionine mark. The disordered stretch occupies residues 1-34; it reads MEGKEEDVRVGANKFPERQPIGTSAQSDKDYKEP. The Cytoplasmic segment spans residues 1–54; the sequence is MEGKEEDVRVGANKFPERQPIGTSAQSDKDYKEPPPAPFFEPGELSSWSFWRAG. A helical membrane pass occupies residues 55-75; it reads IAEFIATFLFLYITVLTVMGV. The Extracellular segment spans residues 76–91; that stretch reads KRSPNMCASVGIQGIA. A helical transmembrane segment spans residues 92-112; the sequence is WAFGGMIFALVYCTAGISGGH. The Cytoplasmic portion of the chain corresponds to 113–132; that stretch reads INPAVTFGLFLARKLSLTRA. Residues 114-116 carry the NPA 1 motif; it reads NPA. A helical transmembrane segment spans residues 133–153; that stretch reads LYYIVMQCLGAICGAGVVKGF. Residues 154–174 are Extracellular-facing; sequence QPKQYQALGGGANTVAHGYTK. A helical transmembrane segment spans residues 175–195; it reads GSGLGAEIIGTFVLVYTVFSA. Over 196 to 208 the chain is Cytoplasmic; sequence TDAKRNARDSHVP. A helical transmembrane segment spans residues 209–229; the sequence is ILAPLPIGFAVFLVHLATIPI. Residues 230–256 are Extracellular-facing; sequence TGTGINPARSLGAAIIYNKDHSWDDHW. Positions 235 to 237 match the NPA 2 motif; sequence NPA. Residues 257-277 traverse the membrane as a helical segment; sequence VFWVGPFIGAALAALYHVVVI. Residues 278 to 286 are Cytoplasmic-facing; sequence RAIPFKSRS. Position 284 is a phosphoserine (Ser-284).

This sequence belongs to the MIP/aquaporin (TC 1.A.8) family. PIP (TC 1.A.8.11) subfamily. As to expression, widely expressed. Expressed in roots, above ground and in flower buds.

The protein resides in the cell membrane. Water channel required to facilitate the transport of water across cell membrane. Its function is impaired by Hg(2+). The sequence is that of Aquaporin PIP1-1 (PIP1-1) from Arabidopsis thaliana (Mouse-ear cress).